A 451-amino-acid chain; its full sequence is Phosphoglucosamine mutase (451 aa).

Catalysis depends on serine 103, which acts as the Phosphoserine intermediate. Positions 103, 243, 245, and 247 each coordinate Mg(2+). Serine 103 bears the Phosphoserine mark.

It belongs to the phosphohexose mutase family. Mg(2+) serves as cofactor. In terms of processing, activated by phosphorylation.

The catalysed reaction is alpha-D-glucosamine 1-phosphate = D-glucosamine 6-phosphate. In terms of biological role, catalyzes the conversion of glucosamine-6-phosphate to glucosamine-1-phosphate. The chain is Phosphoglucosamine mutase from Lactiplantibacillus plantarum (strain ATCC BAA-793 / NCIMB 8826 / WCFS1) (Lactobacillus plantarum).